A 377-amino-acid chain; its full sequence is Cilia- and flagella-associated protein 263 (377 aa).

Coiled-coil stretches lie at residues 95-139 and 169-355; these read LTVE…ADIR and QKVM…LKGY.

The protein belongs to the CFAP263 family. As to quaternary structure, forms a complex with CFAP184; the interaction is required for functional activity in cilia. Interacts with HAP1 and PCM1.

It localises to the cytoplasm. It is found in the cytoskeleton. The protein localises to the microtubule organizing center. Its subcellular location is the centrosome. The protein resides in the centriolar satellite. It localises to the cell projection. It is found in the cilium. In terms of biological role, component of centriolar satellites contributing to primary cilium formation. In complex with CFAP263, acts as a regulator of ciliary beating that connects radial spoke 3 (RS3) to the inner dynein arm (IDA) and the nexin-dynein regulatory complex (N-DRC). The complex is positioned parallel to N-DRC and forms a connection between the arch at the base of RS3, the IDA tail and N-DRC. The chain is Cilia- and flagella-associated protein 263 (Cfap263) from Mus musculus (Mouse).